Consider the following 288-residue polypeptide: DegV domain-containing protein DR_1903 (288 aa).

Positions 2–280 (IAVTTESTAD…PGVVAVLAFP (279 aa)) constitute a DegV domain. Thr-59 and Thr-93 together coordinate hexadecanoate.

Its function is as follows. May bind long-chain fatty acids, such as palmitate, and may play a role in lipid transport or fatty acid metabolism. The protein is DegV domain-containing protein DR_1903 of Deinococcus radiodurans (strain ATCC 13939 / DSM 20539 / JCM 16871 / CCUG 27074 / LMG 4051 / NBRC 15346 / NCIMB 9279 / VKM B-1422 / R1).